Consider the following 438-residue polypeptide: Glutaryl-CoA dehydrogenase, mitochondrial (438 aa).

A mitochondrion-targeting transit peptide spans 1–44 (MALRGVSVRLLSRGPGLHVLRTWVSSAAQTEKGGRTQSQLAKSS). Residues 138–139 (RS) and Ser-186 contribute to the substrate site. FAD is bound by residues 177–186 (FGLTEPNSGS) and 212–214 (WIT). N6-acetyllysine is present on Lys-240. 287–294 (FGCLNNAR) serves as a coordination point for substrate. FAD contacts are provided by residues Arg-319, Gln-330, and 387-391 (DMLGG). Glu-414 serves as the catalytic Proton acceptor. Gly-415 lines the substrate pocket. FAD is bound by residues 416–418 (THD) and Phe-434.

The protein belongs to the acyl-CoA dehydrogenase family. Homotetramer. The cofactor is FAD. Isoform Long and isoform Short are expressed in fibroblasts and liver.

Its subcellular location is the mitochondrion matrix. It carries out the reaction glutaryl-CoA + oxidized [electron-transfer flavoprotein] + 2 H(+) = (2E)-butenoyl-CoA + reduced [electron-transfer flavoprotein] + CO2. It functions in the pathway amino-acid metabolism; lysine degradation. Its pathway is amino-acid metabolism; tryptophan metabolism. Strongly inhibited by MCPA-CoA, a metabolite of hypoglycin which is present in unripened fruit of the ackee tree. Its function is as follows. Catalyzes the oxidative decarboxylation of glutaryl-CoA to crotonyl-CoA and CO(2) in the degradative pathway of L-lysine, L-hydroxylysine, and L-tryptophan metabolism. It uses electron transfer flavoprotein as its electron acceptor. Isoform Short is inactive. This chain is Glutaryl-CoA dehydrogenase, mitochondrial (GCDH), found in Homo sapiens (Human).